We begin with the raw amino-acid sequence, 151 residues long: MESWLFLALILVVALLGKNMSLIIATAVVMLFKLLPFTGKWLPTIQAKGINWGVTIISVAILIPIATGQIGFKDLIRTFKTPAGWIAILAGIAVAVLSRYGVNQLAAVPQVTVALVLGTIIGVVAFKGVAAGPVIASGMTYLVVTLFNLHF.

Helical transmembrane passes span 4-24, 52-72, 78-98, and 115-135; these read WLFL…SLII, WGVT…QIGF, TFKT…AVLS, and LVLG…GPVI.

Belongs to the UPF0756 family.

The protein resides in the cell membrane. This is UPF0756 membrane protein LBA0919 from Lactobacillus acidophilus (strain ATCC 700396 / NCK56 / N2 / NCFM).